A 355-amino-acid polypeptide reads, in one-letter code: Methylthioribose-1-phosphate isomerase (355 aa).

Residues 50–52 (RGA), arginine 93, and glutamine 198 contribute to the substrate site. Catalysis depends on aspartate 239, which acts as the Proton donor. Substrate is bound at residue 249–250 (NK).

This sequence belongs to the eIF-2B alpha/beta/delta subunits family. MtnA subfamily. In terms of assembly, homodimer.

It catalyses the reaction 5-(methylsulfanyl)-alpha-D-ribose 1-phosphate = 5-(methylsulfanyl)-D-ribulose 1-phosphate. The protein operates within amino-acid biosynthesis; L-methionine biosynthesis via salvage pathway; L-methionine from S-methyl-5-thio-alpha-D-ribose 1-phosphate: step 1/6. In terms of biological role, catalyzes the interconversion of methylthioribose-1-phosphate (MTR-1-P) into methylthioribulose-1-phosphate (MTRu-1-P). In Geobacillus kaustophilus (strain HTA426), this protein is Methylthioribose-1-phosphate isomerase.